The primary structure comprises 252 residues: MKTVTVKDLVIGTGAPKIIVSLMAKDIARVKSEALAYREADFDILEWRVDHFADHSNVESVMAAAKILRETMPEKPLLFTFRSAKEGGEQAISTEAYIALNRAAIDSGLVDMIDLELFTGDDQVKETVAYAHAHDVKVVMSNHDFHKTPEAEEIIARLRKMQSFDADIPKIALMPQSTSDVLTLLTATLEMQEQYADRPIITMSMAKTGVISRLAGEVFGSAATFGAVKKASAPGQISVNDLRTVLTILHQA.

3-dehydroquinate-binding positions include Ser-21, 46–48 (EWR), and Arg-82. His-143 serves as the catalytic Proton donor/acceptor. Lys-170 acts as the Schiff-base intermediate with substrate in catalysis. Residues Arg-213, Ser-232, and Gln-236 each contribute to the 3-dehydroquinate site.

This sequence belongs to the type-I 3-dehydroquinase family. As to quaternary structure, homodimer.

It carries out the reaction 3-dehydroquinate = 3-dehydroshikimate + H2O. The protein operates within metabolic intermediate biosynthesis; chorismate biosynthesis; chorismate from D-erythrose 4-phosphate and phosphoenolpyruvate: step 3/7. In terms of biological role, involved in the third step of the chorismate pathway, which leads to the biosynthesis of aromatic amino acids. Catalyzes the cis-dehydration of 3-dehydroquinate (DHQ) and introduces the first double bond of the aromatic ring to yield 3-dehydroshikimate. In Escherichia coli O8 (strain IAI1), this protein is 3-dehydroquinate dehydratase.